The following is a 358-amino-acid chain: Aminomethyltransferase (358 aa).

It belongs to the GcvT family. As to quaternary structure, the glycine cleavage system is composed of four proteins: P, T, L and H.

It catalyses the reaction N(6)-[(R)-S(8)-aminomethyldihydrolipoyl]-L-lysyl-[protein] + (6S)-5,6,7,8-tetrahydrofolate = N(6)-[(R)-dihydrolipoyl]-L-lysyl-[protein] + (6R)-5,10-methylene-5,6,7,8-tetrahydrofolate + NH4(+). Its function is as follows. The glycine cleavage system catalyzes the degradation of glycine. The polypeptide is Aminomethyltransferase (Francisella tularensis subsp. mediasiatica (strain FSC147)).